Here is a 954-residue protein sequence, read N- to C-terminus: Valine--tRNA ligase (954 aa).

The 'HIGH' region motif lies at 48–58; the sequence is PNVTGSLHMGH. The 'KMSKS' region signature appears at 560–564; the sequence is KMSKS. An ATP-binding site is contributed by Lys-563. Residues 883–954 are a coiled coil; sequence AGFINKEAEL…QTQYQAIENL (72 aa).

Belongs to the class-I aminoacyl-tRNA synthetase family. ValS type 1 subfamily. In terms of assembly, monomer.

It is found in the cytoplasm. The catalysed reaction is tRNA(Val) + L-valine + ATP = L-valyl-tRNA(Val) + AMP + diphosphate. In terms of biological role, catalyzes the attachment of valine to tRNA(Val). As ValRS can inadvertently accommodate and process structurally similar amino acids such as threonine, to avoid such errors, it has a 'posttransfer' editing activity that hydrolyzes mischarged Thr-tRNA(Val) in a tRNA-dependent manner. This is Valine--tRNA ligase from Actinobacillus pleuropneumoniae serotype 5b (strain L20).